The chain runs to 372 residues: Enolase (372 aa).

His95 and Glu104 together coordinate substrate. The active-site Proton donor is Glu147. 3 residues coordinate Mg(2+): Asp182, Glu232, and Asp257. Substrate is bound by residues Glu232 and Asp257. The active-site Proton acceptor is the Lys282. Residues 309-312 (SHRS) and Lys333 each bind substrate.

The protein belongs to the enolase family. Homodimer. Mg(2+) is required as a cofactor.

The protein resides in the cytoplasm. The catalysed reaction is (2R)-2-phosphoglycerate = phosphoenolpyruvate + H2O. It participates in carbohydrate degradation; glycolysis; pyruvate from D-glyceraldehyde 3-phosphate: step 4/5. The chain is Enolase (ENO) from Chlamydomonas reinhardtii (Chlamydomonas smithii).